Consider the following 463-residue polypeptide: Succinate--CoA ligase [ADP-forming] subunit beta, mitochondrial (463 aa).

A mitochondrion-targeting transit peptide spans 1 to 53 (MAASVFYGRLLAVATLRNHRPRTALGAAAQVLGSSGLFNNHGLQVQQQQQRNL). The ATP-grasp domain maps to 61–288 (MELLQEAGVS…SNSAYRQKKI (228 aa)). Lys78 carries the N6-acetyllysine modification. Tyr84 is modified (phosphotyrosine). At Lys88 the chain carries N6-acetyllysine; alternate. Residue Lys88 is modified to N6-succinyllysine; alternate. Residues Lys98 and 105–107 (GRG) each bind ATP. N6-acetyllysine is present on residues Lys129, Lys139, Lys143, and Lys216. Residues Asn258 and Asp272 each coordinate Mg(2+). Phosphoserine is present on Ser279. Asn323 contacts substrate. Residue Thr341 is modified to Phosphothreonine. Lys368 carries the N6-acetyllysine modification. 380–382 (GIM) contacts substrate.

This sequence belongs to the succinate/malate CoA ligase beta subunit family. ATP-specific subunit beta subfamily. Heterodimer of an alpha and a beta subunit. The beta subunit determines specificity for ATP. Interacts with ALAS2. Mg(2+) serves as cofactor.

It localises to the mitochondrion. It catalyses the reaction succinate + ATP + CoA = succinyl-CoA + ADP + phosphate. Its pathway is carbohydrate metabolism; tricarboxylic acid cycle; succinate from succinyl-CoA (ligase route): step 1/1. ATP-specific succinyl-CoA synthetase functions in the citric acid cycle (TCA), coupling the hydrolysis of succinyl-CoA to the synthesis of ATP and thus represents the only step of substrate-level phosphorylation in the TCA. The beta subunit provides nucleotide specificity of the enzyme and binds the substrate succinate, while the binding sites for coenzyme A and phosphate are found in the alpha subunit. In Macaca fascicularis (Crab-eating macaque), this protein is Succinate--CoA ligase [ADP-forming] subunit beta, mitochondrial.